Here is a 238-residue protein sequence, read N- to C-terminus: MSTTVLPPPDKKAEYVERMFSRIAPGYDTMNGIITLGLDREWRATTVALAAPPSCGRALDIGTGTGDFLVELTAWMPDGLAVGVDFTVPMMRAGLPKIRDRRAVFVAGDALKLPFADESFDAITTGFTLRNVTDIAAAFREMWRVARVGATVACLEVARPRHPLLRAGHWFYFQRIVPLMARALGADPEAYTYLPQSARIFPPPEELAQIMRAAGWSDVTYRLVGLGAAAIHTGIKRG.

S-adenosyl-L-methionine is bound by residues threonine 65, aspartate 85, and 109-110 (DA).

Belongs to the class I-like SAM-binding methyltransferase superfamily. MenG/UbiE family.

The catalysed reaction is a 2-demethylmenaquinol + S-adenosyl-L-methionine = a menaquinol + S-adenosyl-L-homocysteine + H(+). Its pathway is quinol/quinone metabolism; menaquinone biosynthesis; menaquinol from 1,4-dihydroxy-2-naphthoate: step 2/2. Methyltransferase required for the conversion of demethylmenaquinol (DMKH2) to menaquinol (MKH2). The chain is Demethylmenaquinone methyltransferase from Roseiflexus sp. (strain RS-1).